A 1321-amino-acid polypeptide reads, in one-letter code: Bile salt export pump (1321 aa).

Residues 1–62 (MSDSVILRSI…FSSSTDIWLM (62 aa)) lie on the Cytoplasmic side of the membrane. The disordered stretch occupies residues 16–37 (ENDGFESDKSYNNDKKSRLQDE). Residues 21–37 (ESDKSYNNDKKSRLQDE) are compositionally biased toward basic and acidic residues. Residues 62–385 (MFVGSLCAFL…ASPCLEAFAT (324 aa)) form the ABC transmembrane type-1 1 domain. Residues 63–83 (FVGSLCAFLHGIAQPGVLLIF) traverse the membrane as a helical segment. At 84-147 (GTMTDVFIDY…MIKFASYYAG (64 aa)) the chain is on the extracellular side. N109, N116, N122, and N125 each carry an N-linked (GlcNAc...) asparagine glycan. The chain crosses the membrane as a helical span at residues 148-168 (IAVAVLITGYIQICFWVIAAA). Topologically, residues 169–215 (RQIQKMRKFYFRRIMRMEIGWFDCNSVGELNTRFSDDINKINDAIAD) are cytoplasmic. Residues 216–236 (QMALFIQRMTSTICGFLLGFF) traverse the membrane as a helical segment. Residues 237–240 (RGWK) lie on the Extracellular side of the membrane. The chain crosses the membrane as a helical span at residues 241–261 (LTLVIISVSPLIGIGAATIGL). Residues 262–319 (SVSKFTDYELKAYAKAGVVADEVISSMRTVAAFGGEKREVERYEKNLVFAQRWGIRKG) lie on the Cytoplasmic side of the membrane. Residues 320 to 340 (IVMGFFTGFVWCLIFLCYALA) form a helical membrane-spanning segment. Residues 341-353 (FWYGSTLVLDEGE) are Extracellular-facing. A helical membrane pass occupies residues 354–374 (YTPGTLVQIFLSVIVGALNLG). The Cytoplasmic segment spans residues 375–755 (NASPCLEAFA…KFSAPEWPYM (381 aa)). The region spanning 420-656 (IEFHNVTFHY…KGVYFTLVTL (237 aa)) is the ABC transporter 1 domain. 455–462 (GPSGAGKS) contributes to the ATP binding site. T586 carries the phosphothreonine modification. Phosphoserine is present on S587. Residues 651-672 (FTLVTLQSQGNQALNEEDIKDA) form an interaction with HAX1 region. Residues S690, S701, and S704 each carry the phosphoserine modification. The ABC transmembrane type-1 2 domain maps to 755 to 1043 (MLVGSVGAAV…AFSYTPSYAK (289 aa)). The chain crosses the membrane as a helical span at residues 756-776 (LVGSVGAAVNGTVTPLYAFLF). At 777–794 (SQILGTFSIPDKEEQRSQ) the chain is on the extracellular side. The chain crosses the membrane as a helical span at residues 795–815 (INGVCLLFVAMGCVSLFTQFL). Residues 816–869 (QGYAFAKSGELLTKRLRKFGFRAMLGQDIAWFDDLRNSPGALTTRLATDASQVQ) are Cytoplasmic-facing. 2 consecutive transmembrane segments (helical) span residues 870–890 (GAAGSQIGMIVNSFTNVTVAM) and 891–911 (IIAFSFSWKLSLVILCFFPFL). Residues 912–979 (ALSGATQTRM…PFKTAIQKAN (68 aa)) lie on the Cytoplasmic side of the membrane. The chain crosses the membrane as a helical span at residues 980–1000 (IYGFCFAFAQCIMFIANSASY). The Extracellular portion of the chain corresponds to 1001–1011 (RYGGYLISNEG). A helical transmembrane segment spans residues 1012–1032 (LHFSYVFRVISAVVLSATALG). Over 1033-1321 (RAFSYTPSYA…KLVTTGSPIS (289 aa)) the chain is Cytoplasmic. Residues 1078-1316 (IDFVDCKFTY…KGAYYKLVTT (239 aa)) form the ABC transporter 2 domain. Residue 1113–1120 (GSSGCGKS) participates in ATP binding. S1214 is subject to Phosphoserine. Residues 1311-1314 (YKLV) are mediates internalization from the plasma membrane. S1321 carries the post-translational modification Phosphoserine.

It belongs to the ABC transporter superfamily. ABCB family. Multidrug resistance exporter (TC 3.A.1.201) subfamily. As to quaternary structure, interacts with HAX1. Interacts with the adapter protein complex 2 (AP-2) throught AP2A2 or AP2A1; this interaction regulates cell membrane expression of ABCB11 through its internalization in a clathrin-dependent manner and its subsequent degradation. Post-translationally, N-glycosylated. Ubiquitinated; short-chain ubiquitination regulates cell-Surface expression of ABCB11. As to expression, expressed predominantly, if not exclusively in the liver, where it was further localized to the canalicular microvilli and to subcanalicular vesicles of the hepatocytes by in situ.

The protein localises to the apical cell membrane. It localises to the recycling endosome membrane. It is found in the endosome. Its subcellular location is the cell membrane. It catalyses the reaction cholate(in) + ATP + H2O = cholate(out) + ADP + phosphate + H(+). It carries out the reaction taurocholate(in) + ATP + H2O = taurocholate(out) + ADP + phosphate + H(+). The enzyme catalyses glycocholate(in) + ATP + H2O = glycocholate(out) + ADP + phosphate + H(+). The catalysed reaction is glycochenodeoxycholate(in) + ATP + H2O = glycochenodeoxycholate(out) + ADP + phosphate + H(+). It catalyses the reaction taurochenodeoxycholate(in) + ATP + H2O = taurochenodeoxycholate(out) + ADP + phosphate + H(+). It carries out the reaction glycoursodeoxycholate(in) + ATP + H2O = glycoursodeoxycholate(out) + ADP + phosphate + H(+). The enzyme catalyses tauroursodeoxycholate(in) + ATP + H2O = tauroursodeoxycholate(out) + ADP + phosphate + H(+). The catalysed reaction is taurodeoxycholate(in) + ATP + H2O = taurodeoxycholate(out) + ADP + phosphate + H(+). It catalyses the reaction taurolithocholate 3-sulfate(in) + ATP + H2O = taurolithocholate 3-sulfate(out) + ADP + phosphate + H(+). It carries out the reaction pravastatin(in) + ATP + H2O = pravastatin(out) + ADP + phosphate + H(+). The uptake of taurocholate is inhibited by taurolithocholate sulfate with an IC(50) of 9 uM. Pravastatin competitively inhibits the transport of taurocholic acid. Cyclosporin A, glibenclamide, rifampicin and troglitazonestrongly competitively inhibit the transport activity of taurocholate. The canalicular transport activity of taurocholate is strongly dependent on canalicular membrane cholesterol content. The uptake of taurocholate is increased by short- and medium-chain fatty acids. Cholesterol increases transport capacity of taurocholate without affecting the affinity for the substrate. In terms of biological role, catalyzes the transport of the major hydrophobic bile salts, such as taurine and glycine-conjugated cholic acid across the canalicular membrane of hepatocytes in an ATP-dependent manner, therefore participates in hepatic bile acid homeostasis and consequently to lipid homeostasis through regulation of biliary lipid secretion in a bile salts dependent manner. Transports taurine-conjugated bile salts more rapidly than glycine-conjugated bile salts. Also transports non-bile acid compounds, such as pravastatin and fexofenadine in an ATP-dependent manner and may be involved in their biliary excretion. The chain is Bile salt export pump from Homo sapiens (Human).